Here is a 207-residue protein sequence, read N- to C-terminus: MGCSSSTERLTSTKNINIVTSPAQQQKKNAQDTKVKIVLLGDSGVGKSSIALYLCHGRFSEKHQVTIGAAFLHHNIELKNGATMKLHIWDTGGQERFRSMAPLYYRDAYGAVVVYDSNNVESFDSLKYWINEIKSNGPRNCCIMVVANKKDLPQKLNSEMVMKFCEQENVSFIECSAKTGENITTLFEKLASRIYSRFKEVLYYNNP.

Residue Gly-2 is the site of N-myristoyl glycine attachment. GTP is bound by residues 41–49 (GDSGVGKSS), 60–66 (SEKHQVT), 90–94 (DTGGQ), 148–151 (NKKD), and 176–178 (SAK). Residues 63–71 (HQVTIGAAF) carry the Effector region motif.

This sequence belongs to the small GTPase superfamily. Rab family. As to quaternary structure, interacts with CK1. May interact with ARF1. Post-translationally, myristoylation is required for cell membrane and food vacuole membrane localization. May be palmitoylated on Cys-3. In terms of processing, lacks the C-terminal cysteine motifs subject to isoprenylation present in mammalian RAB5B homolog.

It is found in the cell membrane. The protein resides in the vacuole membrane. Its subcellular location is the vesicle. The catalysed reaction is GTP + H2O = GDP + phosphate + H(+). Its activity is regulated as follows. Alternates between an inactive GDP-bound form and an active GTP-bound form. Activated by guanine nucleotide-exchange factors (GEFs) and inactivated by GTPase-activating proteins (GAPs). In terms of biological role, small GTPase which regulates vesicle trafficking between organelles. May be involved in the trafficking of the N-myristoylated AK2 from the endoplasmic reticulum to the parasitophorous vacuole membrane. This Plasmodium falciparum (isolate 3D7) protein is Ras-related protein Rab-5B.